The primary structure comprises 718 residues: Pentatricopeptide repeat-containing protein At1g22960, mitochondrial (718 aa).

The transit peptide at 1–11 (MILCLRLCLRA) directs the protein to the mitochondrion. 15 PPR repeats span residues 167-201 (ALKLLDLLLWVYTKKSMAEKFLLSFEKMIRKGFLP), 202-236 (SVRNCNIVLKVLRDSRMMNKASAVYETMIEHGIMP), 237-271 (TVITFNTMLDSCFKAGDLERVDKIWLEMKRRNIEF), 272-306 (SEVTYNILINGFSKNGKMEEARRFHGDMRRSGFAV), 307-341 (TPYSFNPLIEGYCKQGLFDDAWGVTDEMLNAGIYP), 342-372 (TTSTYNIYICALCDFGRIDDARELLSSMAAP), 373-407 (DVVSYNTLMHGYIKMGKFVEASLLFDDLRAGDIHP), 408-442 (SIVTYNTLIDGLCESGNLEGAQRLKEEMTTQLIFP), 443-477 (DVITYTTLVKGFVKNGNLSMATEVYDEMLRKGIKP), 478-512 (DGYAYTTRAVGELRLGDSDKAFRLHEEMVATDHHA), 514-548 (DLTIYNVRIDGLCKVGNLVKAIEFQRKIFRVGLVP), 549-583 (DHVTYTTVIRGYLENGQFKMARNLYDEMLRKRLYP), 584-618 (SVITYFVLIYGHAKAGRLEQAFQYSTEMKKRGVRP), 619-653 (NVMTHNALLYGMCKAGNIDEAYRYLCKMEEEGIPP), and 654-688 (NKYSYTMLISKNCDFEKWEEVVKLYKEMLDKEIEP).

This sequence belongs to the PPR family. P subfamily.

It is found in the mitochondrion. This chain is Pentatricopeptide repeat-containing protein At1g22960, mitochondrial, found in Arabidopsis thaliana (Mouse-ear cress).